Reading from the N-terminus, the 107-residue chain is Nucleoid-associated protein Atu0095 (107 aa).

Residues 81-107 are disordered; the sequence is KGEAQAQEKMADLTAGLPLPPGMKLPF. Positions 98-107 are enriched in pro residues; sequence PLPPGMKLPF.

The protein belongs to the YbaB/EbfC family. Homodimer.

Its subcellular location is the cytoplasm. It localises to the nucleoid. Functionally, binds to DNA and alters its conformation. May be involved in regulation of gene expression, nucleoid organization and DNA protection. This chain is Nucleoid-associated protein Atu0095, found in Agrobacterium fabrum (strain C58 / ATCC 33970) (Agrobacterium tumefaciens (strain C58)).